Reading from the N-terminus, the 955-residue chain is E3 ubiquitin-protein ligase MIB2 (955 aa).

Residue Met-1 is modified to N-acetylmethionine. One can recognise an MIB/HERC2 1 domain in the interval 1–80 (MDPDPQAGVQ…AHDLLLYDNA (80 aa)). The ZZ-type zinc finger occupies 86-138 (HPNIICDCCKKHGLRGMRWKCRVCLDYDLCTQCYMHNKHELAHAFDRYETAHS). Zn(2+)-binding residues include Cys-91, Cys-94, Cys-106, Cys-109, Cys-115, Cys-118, His-124, and His-128. One can recognise an MIB/HERC2 2 domain in the interval 149–227 (LPRIPLRGIF…KVDLKCVGEA (79 aa)). A Phosphoserine modification is found at Ser-251. 9 ANK repeats span residues 464–493 (QGRTALQVAAYLGQVELIRLLLQARAGVDL), 497–526 (EGNTALHYAALGNQPEATRVLLSAGCRADA), 530–559 (TQSTALHVAVQRGFLEVVRALCERGCDVNL), 563–595 (HSDTPLHSAISAGTGASGIVEVLTEVPNIDVTA), 599–628 (QGFTLLHHASLKGHALAVRKILARARQLVD), 633–663 (DGFTALHLAALNNHREVAQILIREGRCDVNV), 667–696 (KLQSPLHLAVQQAHVGLVPLLVDAGCSVNA), 700–728 (EGDTALHVALQRHQLLPLVADGAGGDPGP), and 769–798 (RGRSPLDLAAEGRVLKALQGCAQRFRERQA). 2 RING-type zinc fingers span residues 832–867 (CLVCSELALLVLFSPCQHRTVCEECARRMKKCIRCQ) and 911–944 (CPICIDSHIRLVFQCGHGACAPCGSALSACPICR).

In terms of assembly, interacts with actin monomer. Ubiquitinated. Possibly via autoubiquitination. As to expression, expressed in skeletal muscle, and to a lesser extent in heart, brain and kidney.

The protein localises to the cytoplasm. It is found in the endosome. It catalyses the reaction S-ubiquitinyl-[E2 ubiquitin-conjugating enzyme]-L-cysteine + [acceptor protein]-L-lysine = [E2 ubiquitin-conjugating enzyme]-L-cysteine + N(6)-ubiquitinyl-[acceptor protein]-L-lysine.. The protein operates within protein modification; protein ubiquitination. Functionally, E3 ubiquitin-protein ligase that mediates ubiquitination of Delta receptors, which act as ligands of Notch proteins. Positively regulates the Delta-mediated Notch signaling by ubiquitinating the intracellular domain of Delta, leading to endocytosis of Delta receptors. The chain is E3 ubiquitin-protein ligase MIB2 from Homo sapiens (Human).